The chain runs to 244 residues: MAGHSKWANIKHRKEKMDSLRGKVFTKLAREIMVAARLGGGDPEANPRLKAAIARAREANIPNENIQRAIMKGTGELAAESYEEVFYEGYGPGGVAILLKIMTDNRNRTAGEIRHLFSKHGGSMGEAGSVQWIFEEKGYITIPKEDNPGINEEEILLLVLDAGAEDLKDEGDQFEVITAPEAFEKVKDALNNANIKTSIAEITMLPKTTVPVSGEEAQKLLKLLDLFEEHDDVQEVYANFELVD.

It belongs to the TACO1 family.

The protein resides in the cytoplasm. The protein is Probable transcriptional regulatory protein CHY_1525 of Carboxydothermus hydrogenoformans (strain ATCC BAA-161 / DSM 6008 / Z-2901).